A 206-amino-acid chain; its full sequence is 2,3-bisphosphoglycerate-dependent phosphoglycerate mutase (206 aa).

Residues 9-16 (RHGQSEWN), 22-23 (TG), Arg61, 88-91 (ERDY), Lys99, 115-116 (RR), and 159-160 (GN) each bind substrate. Catalysis depends on His10, which acts as the Tele-phosphohistidine intermediate. The Proton donor/acceptor role is filled by Glu88.

It belongs to the phosphoglycerate mutase family. BPG-dependent PGAM subfamily. As to quaternary structure, homodimer.

It catalyses the reaction (2R)-2-phosphoglycerate = (2R)-3-phosphoglycerate. It functions in the pathway carbohydrate degradation; glycolysis; pyruvate from D-glyceraldehyde 3-phosphate: step 3/5. Its function is as follows. Catalyzes the interconversion of 2-phosphoglycerate and 3-phosphoglycerate. The chain is 2,3-bisphosphoglycerate-dependent phosphoglycerate mutase from Brucella abortus (strain S19).